Reading from the N-terminus, the 297-residue chain is Acetyl-coenzyme A carboxylase carboxyl transferase subunit beta (297 aa).

The CoA carboxyltransferase N-terminal domain occupies 27-296; the sequence is LWHKCPACEA…PEQAREAAAV (270 aa). Cys31, Cys34, Cys50, and Cys53 together coordinate Zn(2+). Residues 31–53 form a C4-type zinc finger; the sequence is CPACEAVLYRPELEKTLDVCPKC.

This sequence belongs to the AccD/PCCB family. In terms of assembly, acetyl-CoA carboxylase is a heterohexamer composed of biotin carboxyl carrier protein (AccB), biotin carboxylase (AccC) and two subunits each of ACCase subunit alpha (AccA) and ACCase subunit beta (AccD). Requires Zn(2+) as cofactor.

The protein resides in the cytoplasm. The catalysed reaction is N(6)-carboxybiotinyl-L-lysyl-[protein] + acetyl-CoA = N(6)-biotinyl-L-lysyl-[protein] + malonyl-CoA. It participates in lipid metabolism; malonyl-CoA biosynthesis; malonyl-CoA from acetyl-CoA: step 1/1. In terms of biological role, component of the acetyl coenzyme A carboxylase (ACC) complex. Biotin carboxylase (BC) catalyzes the carboxylation of biotin on its carrier protein (BCCP) and then the CO(2) group is transferred by the transcarboxylase to acetyl-CoA to form malonyl-CoA. The chain is Acetyl-coenzyme A carboxylase carboxyl transferase subunit beta from Pseudomonas putida (strain W619).